Reading from the N-terminus, the 317-residue chain is Tumor-associated calcium signal transducer 2 (317 aa).

Residues 1–24 form the signal peptide; it reads MARGLDLAPLLLLLLAMVAGFCTA. The Extracellular portion of the chain corresponds to 25–270; the sequence is QINCTCPTNK…QFSMKRLTTG (246 aa). N-linked (GlcNAc...) asparagine glycosylation is present at Asn27. In terms of domain architecture, Thyroglobulin type-1 spans 64–139; that stretch reads TSKCLLLKAR…TDKGDQSLRC (76 aa). 3 cysteine pairs are disulfide-bonded: Cys67/Cys102, Cys113/Cys119, and Cys121/Cys139. A glycan (N-linked (GlcNAc...) asparagine) is linked at Asn114. N-linked (GlcNAc...) asparagine glycosylation is found at Asn162 and Asn202. The chain crosses the membrane as a helical span at residues 271–291; the sequence is LIAVIAVVAVALVAGVVVLVV. The Cytoplasmic portion of the chain corresponds to 292-317; the sequence is TNRRKSGKYKKVELKELGEMRSEPSL.

It belongs to the EPCAM family.

The protein localises to the membrane. Functionally, may function as a growth factor receptor. The sequence is that of Tumor-associated calcium signal transducer 2 (Tacstd2) from Rattus norvegicus (Rat).